Here is a 1336-residue protein sequence, read N- to C-terminus: Lysine-specific demethylase 2B (1336 aa).

The tract at residues 1 to 25 (MAGPQMGGSAEDHPPRKRHAAEKQK) is disordered. The segment covering 15–25 (PRKRHAAEKQK) has biased composition (basic residues). Ser57 carries the phosphoserine modification. The 169-residue stretch at 178–346 (FSHTKLEHLV…MQLRIYEIED (169 aa)) folds into the JmjC domain. Thr239 is a binding site for substrate. Residues His242 and Asp244 each coordinate Fe cation. Lys259 contacts substrate. His314 is a Fe cation binding site. Over residues 410–430 (MEEEACDQQPQEEEEKDEEGE) the composition is skewed to acidic residues. Residues 410-465 (MEEEACDQQPQEEEEKDEEGEGRDRAPKPPTDGSTSPTSTPSEDQEALGKKPKAPA) are disordered. Residues 440–451 (TDGSTSPTSTPS) are compositionally biased toward low complexity. Phosphoserine occurs at positions 474 and 477. Residue Thr493 is modified to Phosphothreonine. Ser497 bears the Phosphoserine mark. Residues 606–652 (ARRRRTRCRKCEACLRTECGECHFCKDMKKFGGPGRMKQSCIMRQCI) form a CXXC-type zinc finger. Cys613, Cys616, Cys619, Cys624, Cys627, Cys630, Cys646, Cys651, Cys662, Cys665, Cys688, Cys691, His696, Cys699, Cys719, and Cys722 together coordinate Zn(2+). The segment at 659–725 (TAVCLVCGEA…CWECPKCNHA (67 aa)) adopts a PHD-type zinc-finger fold. 2 disordered regions span residues 727-843 (KTGK…SLSP) and 855-1034 (QLKP…SPPK). Residues 749–799 (KEQKMNRDNKEGQEPAKRRSECEEAPRRRSDEHSKKVPPDGLLRRKSDDVH) show a composition bias toward basic and acidic residues. Residues 819 to 843 (SSLQTSPGSSSHLSPRPPLGSSLSP) are compositionally biased toward low complexity. Glycyl lysine isopeptide (Lys-Gly) (interchain with G-Cter in SUMO2) cross-links involve residues Lys857 and Lys890. Positions 902–911 (PKTRESDHSR) are enriched in basic and acidic residues. The segment covering 932–941 (KVKMRRKRRL) has biased composition (basic residues). Positions 942–960 (PNKELSRELSKELNHEIQR) are enriched in basic and acidic residues. The stretch at 943-971 (NKELSRELSKELNHEIQRTENSLANENQQ) forms a coiled coil. Ser951 carries the phosphoserine modification. Residues 961–971 (TENSLANENQQ) show a composition bias toward polar residues. Phosphoserine occurs at positions 975, 979, 1018, and 1031. A compositionally biased stretch (low complexity) spans 1014 to 1024 (PSLRSPPRVIS). An F-box domain is found at 1059–1105 (DGAAHVMHREVWMAVFSYLSHQDLCVCMRVCRTWNRWCCDKRLWTRI). LRR repeat units follow at residues 1093 to 1120 (NRWCCDKRLWTRIDLNHCKSITPLMLSG), 1133 to 1154 (WTNISKKQLSWLINRLPGLRDL), 1156 to 1182 (LSGCSWIAVSALCSSSCPLLRTLDVQW), 1222 to 1247 (GLDITDASLRLIIRHMPLLSKLHLSY), 1248 to 1277 (CNHVTDQSINLLTAVGTTTRDSLTEINLSD), 1278 to 1302 (CNKVTDQCLSFFKRCGNICHIDLRY), and 1303 to 1336 (CKQVTKEGCEQFIAEMSVSVQFGQVEEKLLQKLS).

It belongs to the JHDM1 histone demethylase family. Interacts with SKP1, forming heterodimers. The heterodimeric KDM2B-SKP1 complex interacts with the PCGF1-BCORL1 heterodimeric complex to form a homotetrameric polycomb repression complex 1 (PRC1.1). Directly interacts with CUL1. The SKP1-KDM2B complex interacts with UBB. The cofactor is Fe(2+).

It is found in the nucleus. Its subcellular location is the nucleolus. The protein resides in the chromosome. The enzyme catalyses N(6),N(6)-dimethyl-L-lysyl(36)-[histone H3] + 2 2-oxoglutarate + 2 O2 = L-lysyl(36)-[histone H3] + 2 formaldehyde + 2 succinate + 2 CO2. Its activity is regulated as follows. Histone demethylase activity is inhibited by fumarate. Its function is as follows. Histone demethylase that demethylates 'Lys-4' and 'Lys-36' of histone H3, thereby playing a central role in histone code. Preferentially demethylates trimethylated H3 'Lys-4' and dimethylated H3 'Lys-36' residue while it has weak or no activity for mono- and tri-methylated H3 'Lys-36'. Preferentially binds the transcribed region of ribosomal RNA and represses the transcription of ribosomal RNA genes which inhibits cell growth and proliferation. May also serve as a substrate-recognition component of the SCF (SKP1-CUL1-F-box protein)-type E3 ubiquitin ligase complex. The polypeptide is Lysine-specific demethylase 2B (KDM2B) (Homo sapiens (Human)).